A 445-amino-acid chain; its full sequence is 3-phosphoshikimate 1-carboxyvinyltransferase (445 aa).

The interval 1–20 (MSTSAAPTPLESRASGPLSG) is disordered. Residues lysine 28, serine 29, and arginine 33 each coordinate 3-phosphoshikimate. Lysine 28 is a binding site for phosphoenolpyruvate. The phosphoenolpyruvate site is built by glycine 101 and arginine 129. 4 residues coordinate 3-phosphoshikimate: serine 175, glutamine 177, aspartate 328, and lysine 355. Phosphoenolpyruvate is bound at residue glutamine 177. Aspartate 328 (proton acceptor) is an active-site residue. The phosphoenolpyruvate site is built by arginine 359 and arginine 402.

It belongs to the EPSP synthase family. Monomer.

It localises to the cytoplasm. The catalysed reaction is 3-phosphoshikimate + phosphoenolpyruvate = 5-O-(1-carboxyvinyl)-3-phosphoshikimate + phosphate. It participates in metabolic intermediate biosynthesis; chorismate biosynthesis; chorismate from D-erythrose 4-phosphate and phosphoenolpyruvate: step 6/7. Catalyzes the transfer of the enolpyruvyl moiety of phosphoenolpyruvate (PEP) to the 5-hydroxyl of shikimate-3-phosphate (S3P) to produce enolpyruvyl shikimate-3-phosphate and inorganic phosphate. This is 3-phosphoshikimate 1-carboxyvinyltransferase from Bradyrhizobium sp. (strain ORS 278).